The primary structure comprises 295 residues: Mediator of RNA polymerase II transcription subunit 27 (295 aa).

The protein belongs to the Mediator complex subunit 27 family. Component of the Mediator complex.

Its subcellular location is the nucleus. In terms of biological role, component of the Mediator complex, a coactivator involved in the regulated transcription of nearly all RNA polymerase II-dependent genes. Mediator functions as a bridge to convey information from gene-specific regulatory proteins to the basal RNA polymerase II transcription machinery. Mediator is recruited to promoters by direct interactions with regulatory proteins and serves as a scaffold for the assembly of a functional preinitiation complex with RNA polymerase II and the general transcription factors. In Aedes aegypti (Yellowfever mosquito), this protein is Mediator of RNA polymerase II transcription subunit 27 (MED27).